We begin with the raw amino-acid sequence, 377 residues long: MRRLLTPWRGVAAGFLLNGILLGTWASRVPAVMGHFHVAKASFGVLLLLLGLGALISFPITGRLSDSLGAVRVARMIAIPFLVSIAALGLAPTIPLLAIALFLFGMCHGSMDVAVNSWASEVEKHMGRPVMSSFHAMWSVGAVLGAAGGYIATVFQTPVYVHFLVTAVTIGGLLGPFLLLDWQSTIRTHESGAVGLVLPNSGLFLVGLIALASGLGEGTALDWSAVYLHDVVGTEESDAALGYMGFSAAMVMMRLKADSLVTRWGSATVARISGFSAVFGILLIVLGETLPLVVAGFVLMGVGYAAVLPLAFSRAAADLVVPAGKAIASVAIFAYGAMTLGPFAIGLLAEAATMRLCFFIVGLFAALVAVLAPVLKQ.

Transmembrane regions (helical) follow at residues 4–24, 41–61, 85–105, 134–154, 159–179, 192–212, 278–298, 301–321, 327–347, and 356–376; these read LLTP…LLGT, ASFG…FPIT, IAAL…FLFG, FHAM…IATV, VYVH…PFLL, GAVG…IALA, VFGI…AGFV, GVGY…DLVV, IASV…AIGL, and LCFF…PVLK.

This sequence to R.meliloti MosC.

It localises to the cell membrane. Could be involved in a transport system. This is an uncharacterized protein from Sinorhizobium fredii (strain NBRC 101917 / NGR234).